The following is a 359-amino-acid chain: Protein disulfide-isomerase C17H9.14c (359 aa).

Positions 1-19 (MRLPLLSFVIFALFALVFA) are cleaved as a signal peptide. 2 Thioredoxin domains span residues 20-130 (SGVV…EKTG) and 134-250 (RKIV…KKSG). Catalysis depends on nucleophile residues C51 and C54. Intrachain disulfides connect C51–C54 and C170–C173.

It belongs to the protein disulfide isomerase family.

The catalysed reaction is Catalyzes the rearrangement of -S-S- bonds in proteins.. In terms of biological role, participates in the folding of proteins containing disulfide bonds, may be involved in glycosylation, prolyl hydroxylation and triglyceride transfer. The sequence is that of Protein disulfide-isomerase C17H9.14c from Schizosaccharomyces pombe (strain 972 / ATCC 24843) (Fission yeast).